Consider the following 89-residue polypeptide: UPF0145 protein MJ1170 (89 aa).

It belongs to the UPF0145 family. Highly divergent.

This chain is UPF0145 protein MJ1170, found in Methanocaldococcus jannaschii (strain ATCC 43067 / DSM 2661 / JAL-1 / JCM 10045 / NBRC 100440) (Methanococcus jannaschii).